Here is a 503-residue protein sequence, read N- to C-terminus: Maturase K (503 aa).

The protein belongs to the intron maturase 2 family. MatK subfamily.

The protein localises to the plastid. Its subcellular location is the chloroplast. In terms of biological role, usually encoded in the trnK tRNA gene intron. Probably assists in splicing its own and other chloroplast group II introns. The polypeptide is Maturase K (Panax ginseng (Korean ginseng)).